The following is a 190-amino-acid chain: Glucose-6-phosphate isomerase (190 aa).

Fe cation contacts are provided by histidine 89, histidine 91, glutamate 98, and histidine 137.

This sequence belongs to the archaeal-type GPI family. Homodimer. Fe cation is required as a cofactor.

Its subcellular location is the cytoplasm. The catalysed reaction is alpha-D-glucose 6-phosphate = beta-D-fructose 6-phosphate. The protein operates within carbohydrate degradation; glycolysis; D-glyceraldehyde 3-phosphate and glycerone phosphate from D-glucose: step 2/4. Its activity is regulated as follows. Inhibited by mannose 6-phosphate, fructose 1-phosphate and fructose 1,6-bisphosphate. Its activity is also inhibited by Cobalt (II) ions &lt; EDTA &lt; nickel (II) ions &lt; zinc (II) ions &lt;&lt; cadmium (II) ions &lt; copper (II) ions. Sodium and potassium ions and manganese ions show little or no effect on activity. The sequence is that of Glucose-6-phosphate isomerase (pgiA) from Thermococcus litoralis.